The following is a 504-amino-acid chain: Anaerobic nitric oxide reductase transcription regulator NorR (504 aa).

Position 57 is a 4-aspartylphosphate (Asp57). The region spanning 187-416 (MIGLSPGMTQ…LEHAIHRAVV (230 aa)) is the Sigma-54 factor interaction domain. Residues 215-222 (GETGTGKE) and 278-287 (ADNGTLFLDE) contribute to the ATP site. Residues 479–498 (WAACARMLETDVANLHRLAK) constitute a DNA-binding region (H-T-H motif).

Its pathway is nitrogen metabolism; nitric oxide reduction. In terms of biological role, required for the expression of anaerobic nitric oxide (NO) reductase, acts as a transcriptional activator for at least the norVW operon. Activation also requires sigma-54. This is Anaerobic nitric oxide reductase transcription regulator NorR from Escherichia coli O157:H7.